Consider the following 346-residue polypeptide: MKFAILFGGNSYEHEISIVSAVALKKVINQNLEFIFCDEERRFYHIPSEKMNSKTFSTKAYKKEKELFIQQGGFFSKGFLKENKLECECVINLIHGGDGEDGKIAALFEFYSIKFIGPRLEASVLSFNKELTKLYAKSVGVKTLDYTMLRKGQNSKEKLRFPCIIKPARLGSSIGISIVKDEKDLEYAKDVGFEFDNDLVVEEFKNNIKEYNLAGCVINDKFVFSIIEEPKKKEFLDFEQKYLSFSGHNELIEANLSEELKEKLKDSFKKIYNPLFKGALIRCDFFILDNEVYLNEINPNPGSLANYLFKDFSTTLNTLADQIPLEKMIKINYNFLHSINGQKGKL.

An ATP-grasp domain is found at 133 to 327; sequence KLYAKSVGVK…TLADQIPLEK (195 aa). 159–211 is a binding site for ATP; that stretch reads LRFPCIIKPARLGSSIGISIVKDEKDLEYAKDVGFEFDNDLVVEEFKNNIKEY. The Mg(2+) site is built by Asp284, Glu296, and Asn298.

The protein belongs to the D-alanine--D-alanine ligase family. Mg(2+) serves as cofactor. It depends on Mn(2+) as a cofactor.

Its subcellular location is the cytoplasm. The enzyme catalyses 2 D-alanine + ATP = D-alanyl-D-alanine + ADP + phosphate + H(+). Its pathway is cell wall biogenesis; peptidoglycan biosynthesis. Cell wall formation. The sequence is that of D-alanine--D-alanine ligase from Campylobacter jejuni subsp. doylei (strain ATCC BAA-1458 / RM4099 / 269.97).